The sequence spans 312 residues: Methionyl-tRNA formyltransferase (312 aa).

109–112 (SLLP) is a (6S)-5,6,7,8-tetrahydrofolate binding site.

This sequence belongs to the Fmt family.

The enzyme catalyses L-methionyl-tRNA(fMet) + (6R)-10-formyltetrahydrofolate = N-formyl-L-methionyl-tRNA(fMet) + (6S)-5,6,7,8-tetrahydrofolate + H(+). In terms of biological role, attaches a formyl group to the free amino group of methionyl-tRNA(fMet). The formyl group appears to play a dual role in the initiator identity of N-formylmethionyl-tRNA by promoting its recognition by IF2 and preventing the misappropriation of this tRNA by the elongation apparatus. In Anaeromyxobacter sp. (strain K), this protein is Methionyl-tRNA formyltransferase.